A 181-amino-acid polypeptide reads, in one-letter code: Histone deacetylase complex subunit SAP30L-A (181 aa).

Disulfide bonds link cysteine 26–cysteine 27 and cysteine 35–cysteine 71. Residues 26–74 (CCLIDGGERCPRPAGNASFSKRVQKSISQKKLKLDIDKNVRHLYICDFH) form an Atypical zinc finger. The disordered stretch occupies residues 82–103 (RNKRKRKTSDDGGDSPEHETDI). A Nuclear localization signal (NLS) motif is present at residues 83–88 (NKRKRK). Positions 85–87 (RKR) are important for DNA and phosphoinositide binding.

This sequence belongs to the SAP30 family. Interacts with components of the histone deacetylase complex sin3a, hdac1 and hdac2. Binds histones and nucleosomes.

It localises to the nucleus. It is found in the nucleolus. Functionally, functions as a transcription repressor, probably via its interaction with histone deacetylase complexes. Involved in the functional recruitment of the class 1 Sin3-histone deacetylase complex (HDAC) to the nucleolus. Binds DNA, apparently without sequence-specificity, and bends bound double-stranded DNA. Binds phosphoinositol phosphates (phosphoinositol 3-phosphate, phosphoinositol 4-phosphate and phosphoinositol 5-phosphate) via the same basic sequence motif that mediates DNA binding and nuclear import. In Xenopus laevis (African clawed frog), this protein is Histone deacetylase complex subunit SAP30L-A (sap30l-a).